Consider the following 264-residue polypeptide: Phosphate import ATP-binding protein PstB (264 aa).

An ABC transporter domain is found at 11–250 (LKAEALSVYY…DTTEKIFDSP (240 aa)). ATP is bound at residue 43–50 (GPSGCGKS).

Belongs to the ABC transporter superfamily. Phosphate importer (TC 3.A.1.7) family. In terms of assembly, the complex is composed of two ATP-binding proteins (PstB), two transmembrane proteins (PstC and PstA) and a solute-binding protein (PstS).

It is found in the cell inner membrane. It catalyses the reaction phosphate(out) + ATP + H2O = ADP + 2 phosphate(in) + H(+). In terms of biological role, part of the ABC transporter complex PstSACB involved in phosphate import. Responsible for energy coupling to the transport system. This chain is Phosphate import ATP-binding protein PstB, found in Synechococcus elongatus (strain ATCC 33912 / PCC 7942 / FACHB-805) (Anacystis nidulans R2).